A 431-amino-acid chain; its full sequence is 4-hydroxy-3-methylbut-2-en-1-yl diphosphate synthase (flavodoxin) (431 aa).

The interval 1-21 (MNKLENPSQRDVAGPSPRHKT) is disordered. [4Fe-4S] cluster is bound by residues Cys310, Cys313, Cys356, and Glu363.

This sequence belongs to the IspG family. [4Fe-4S] cluster serves as cofactor.

It catalyses the reaction (2E)-4-hydroxy-3-methylbut-2-enyl diphosphate + oxidized [flavodoxin] + H2O + 2 H(+) = 2-C-methyl-D-erythritol 2,4-cyclic diphosphate + reduced [flavodoxin]. It functions in the pathway isoprenoid biosynthesis; isopentenyl diphosphate biosynthesis via DXP pathway; isopentenyl diphosphate from 1-deoxy-D-xylulose 5-phosphate: step 5/6. Its function is as follows. Converts 2C-methyl-D-erythritol 2,4-cyclodiphosphate (ME-2,4cPP) into 1-hydroxy-2-methyl-2-(E)-butenyl 4-diphosphate. The protein is 4-hydroxy-3-methylbut-2-en-1-yl diphosphate synthase (flavodoxin) of Nitrobacter hamburgensis (strain DSM 10229 / NCIMB 13809 / X14).